The chain runs to 160 residues: Large ribosomal subunit protein eL14 (160 aa).

The interval 136 to 160 (SDGTPRILKKDRRERLRAEKAKAKK) is disordered. Residues 146-160 (DRRERLRAEKAKAKK) are compositionally biased toward basic and acidic residues.

Belongs to the eukaryotic ribosomal protein eL14 family.

This Drosophila virilis (Fruit fly) protein is Large ribosomal subunit protein eL14 (RpL14).